The following is a 163-amino-acid chain: MKIGVYAGSFDPITKGHQDIIERALKIVDKLIVVVMNNPTKNYWFNLDERKNLISKIFEGSDSIKVDEHAGLLVDFMAKNSCNILIKGLRDVKDFSEEMTYSFANKKLSNGEVDTIFIPTSEKYTYVSSTFVKELAFYNQSLTGYVDDKVIVDILNRAKEYRG.

Residue S9 coordinates substrate. Residues 9-10 (SF) and H17 contribute to the ATP site. Substrate-binding residues include K41, L73, and K87. ATP-binding positions include 88–90 (GLR), E98, and 124–130 (YTYVSST).

This sequence belongs to the bacterial CoaD family. As to quaternary structure, homohexamer. Requires Mg(2+) as cofactor.

Its subcellular location is the cytoplasm. The catalysed reaction is (R)-4'-phosphopantetheine + ATP + H(+) = 3'-dephospho-CoA + diphosphate. It participates in cofactor biosynthesis; coenzyme A biosynthesis; CoA from (R)-pantothenate: step 4/5. Reversibly transfers an adenylyl group from ATP to 4'-phosphopantetheine, yielding dephospho-CoA (dPCoA) and pyrophosphate. The sequence is that of Phosphopantetheine adenylyltransferase from Fusobacterium nucleatum subsp. nucleatum (strain ATCC 25586 / DSM 15643 / BCRC 10681 / CIP 101130 / JCM 8532 / KCTC 2640 / LMG 13131 / VPI 4355).